We begin with the raw amino-acid sequence, 266 residues long: Early E1A protein (266 aa).

Positions 39–47 are interaction with RB1 in competition with E2F1; the sequence is PSLYELYDL. Residues 75–145 are interaction with UBE2I; sequence EGLFLPEPPV…AAAAADRERE (71 aa). Positions 98–102 match the PXLXP motif, interaction with host ZMYND11 motif; it reads PQLHP. The LXCXE motif, interaction with host RB1 and TMEM173/STING motif lies at 107 to 111; the sequence is LLCYE. A zinc finger lies at 159 to 179; sequence CKSCEHHRNSTGNTDLMCSLC. The segment at 195-226 is disordered; sequence NEPEPNSTLDGDERPSPPKLGSAVPEGVIKPV. Positions 255 to 259 match the PXDLS motif, CTBP-binding motif; that stretch reads PVDLS. Positions 261-265 match the Nuclear localization signal motif; that stretch reads KRPRC.

Belongs to the adenoviridae E1A protein family. In terms of assembly, interacts with host UBE2I; this interaction interferes with polySUMOylation. Interacts with host RB1; this interaction induces the aberrant dissociation of RB1-E2F1 complex thereby disrupting the activity of RB1 and activating E2F1-regulated genes. Interacts with host ATF7; the interaction enhances ATF7-mediated viral transactivation activity which requires the zinc binding domains of both proteins. Isoform early E1A 32 kDa protein and isoform early E1A 26 kDa protein interact (via N-terminus) with CUL1 and E3 ubiquitin ligase RBX1; these interactions inhibit RBX1-CUL1-dependent elongation reaction of ubiquitin chains and attenuate ubiquitination of SCF(FBXW7) target proteins. Interacts (via PXLXP motif) with host ZMYND11/BS69 (via MYND-type zinc finger); this interaction inhibits E1A mediated transactivation. Interacts with host EP300; this interaction stimulates the acetylation of RB1 by recruiting EP300 and RB1 into a multimeric-protein complex. Interacts with host CTBP1 and CTBP2; this interaction seems to potentiate viral replication. Interacts with host DCAF7. Interacts with host DYRK1A. Interacts with host KPNA4; this interaction allows E1A import into the host nucleus. Interacts with host EP400; this interaction stabilizes MYC. Interacts with host TBP protein; this interaction probably disrupts the TBP-TATA complex. Interacts (via LXCXE motif) with host TMEM173/STING; this interaction impairs the ability of TMEM173/STING to sense cytosolic DNA and promote the production of type I interferon (IFN-alpha and IFN-beta). Interacts (via C-terminus) with host ZBED1/hDREF (via C-terminus); the interaction is direct.

Its subcellular location is the host nucleus. Functionally, plays a role in viral genome replication by driving entry of quiescent cells into the cell cycle. Stimulation of progression from G1 to S phase allows the virus to efficiently use the cellular DNA replicating machinery to achieve viral genome replication. E1A protein has both transforming and trans-activating activities. Induces the disassembly of the E2F1 transcription factor from RB1 by direct competition for the same binding site on RB1, with subsequent transcriptional activation of E2F1-regulated S-phase genes and of the E2 region of the adenoviral genome. Release of E2F1 leads to the ARF-mediated inhibition of MDM2 and causes TP53/p53 to accumulate because it is not targeted for degradation by MDM2-mediated ubiquitination anymore. This increase in TP53, in turn, would arrest the cell proliferation and direct its death but this effect is counteracted by the viral protein E1B-55K. Inactivation of the ability of RB1 to arrest the cell cycle is critical for cellular transformation, uncontrolled cellular growth and proliferation induced by viral infection. Interaction with RBX1 and CUL1 inhibits ubiquitination of the proteins targeted by SCF(FBXW7) ubiquitin ligase complex, and may be linked to unregulated host cell proliferation. The tumorigenesis-restraining activity of E1A may be related to the disruption of the host CtBP-CtIP complex through the CtBP binding motif. Interaction with host TMEM173/STING impairs the ability of TMEM173/STING to sense cytosolic DNA and promote the production of type I interferon (IFN-alpha and IFN-beta). Promotes the sumoylation of host ZBED1/hDREF with SUMO1. The protein is Early E1A protein of Homo sapiens (Human).